Here is a 255-residue protein sequence, read N- to C-terminus: Probable membrane transporter protein HI_0198 (255 aa).

The next 8 membrane-spanning stretches (helical) occupy residues 7–27 (LLAI…IAGG), 28–48 (GGLI…MALG), 76–96 (IWFI…LIQS), 99–119 (VAIF…YFLF), 132–152 (LSYL…DGFF), 153–173 (GPGT…FNLP), 191–211 (FALF…MMAG), and 235–255 (VVIM…WFHF).

It belongs to the 4-toluene sulfonate uptake permease (TSUP) (TC 2.A.102) family.

It localises to the cell membrane. This is Probable membrane transporter protein HI_0198 from Haemophilus influenzae (strain ATCC 51907 / DSM 11121 / KW20 / Rd).